Reading from the N-terminus, the 575-residue chain is Beta-amylase (575 aa).

Residues 1–36 form the signal peptide; it reads MLHSQKRIWKKIGLCLLSFILGITVFTGSFGSKAEA. A substrate-binding site is contributed by D77. The Ca(2+) site is built by E84 and D88. Substrate-binding residues include H117 and D125. C119 and C127 are oxidised to a cystine. E171 serves as a coordination point for Ca(2+). E199 (proton donor) is an active-site residue. Substrate is bound by residues K315, H320, and T358. The active-site Proton acceptor is the E395. Substrate is bound by residues 396-397 and R424; that span reads NA.

The protein belongs to the glycosyl hydrolase 14 family. In terms of assembly, monomer. Requires Ca(2+) as cofactor.

It carries out the reaction Hydrolysis of (1-&gt;4)-alpha-D-glucosidic linkages in polysaccharides so as to remove successive maltose units from the non-reducing ends of the chains.. This Niallia circulans (Bacillus circulans) protein is Beta-amylase.